The chain runs to 476 residues: Bifunctional protein GlmU (476 aa).

The pyrophosphorylase stretch occupies residues Met-1 to Arg-232. UDP-N-acetyl-alpha-D-glucosamine is bound by residues Leu-9 to Gly-12, Lys-23, Gln-75, and Gly-80 to Thr-81. Asp-105 is a binding site for Mg(2+). The UDP-N-acetyl-alpha-D-glucosamine site is built by Gly-142, Glu-157, Asn-172, and Asn-230. Position 230 (Asn-230) interacts with Mg(2+). Residues Val-233–Asn-253 are linker. An N-acetyltransferase region spans residues Gly-254–Gln-476. Positions 353 and 371 each coordinate UDP-N-acetyl-alpha-D-glucosamine. His-383 serves as the catalytic Proton acceptor. UDP-N-acetyl-alpha-D-glucosamine-binding residues include Tyr-386 and Asn-397. Residues Asn-406 to Tyr-407, Ser-425, Ala-443, and Arg-460 each bind acetyl-CoA.

The protein in the N-terminal section; belongs to the N-acetylglucosamine-1-phosphate uridyltransferase family. In the C-terminal section; belongs to the transferase hexapeptide repeat family. In terms of assembly, homotrimer. Mg(2+) is required as a cofactor.

Its subcellular location is the cytoplasm. It carries out the reaction alpha-D-glucosamine 1-phosphate + acetyl-CoA = N-acetyl-alpha-D-glucosamine 1-phosphate + CoA + H(+). It catalyses the reaction N-acetyl-alpha-D-glucosamine 1-phosphate + UTP + H(+) = UDP-N-acetyl-alpha-D-glucosamine + diphosphate. The protein operates within nucleotide-sugar biosynthesis; UDP-N-acetyl-alpha-D-glucosamine biosynthesis; N-acetyl-alpha-D-glucosamine 1-phosphate from alpha-D-glucosamine 6-phosphate (route II): step 2/2. Its pathway is nucleotide-sugar biosynthesis; UDP-N-acetyl-alpha-D-glucosamine biosynthesis; UDP-N-acetyl-alpha-D-glucosamine from N-acetyl-alpha-D-glucosamine 1-phosphate: step 1/1. It functions in the pathway bacterial outer membrane biogenesis; LPS lipid A biosynthesis. Functionally, catalyzes the last two sequential reactions in the de novo biosynthetic pathway for UDP-N-acetylglucosamine (UDP-GlcNAc). The C-terminal domain catalyzes the transfer of acetyl group from acetyl coenzyme A to glucosamine-1-phosphate (GlcN-1-P) to produce N-acetylglucosamine-1-phosphate (GlcNAc-1-P), which is converted into UDP-GlcNAc by the transfer of uridine 5-monophosphate (from uridine 5-triphosphate), a reaction catalyzed by the N-terminal domain. This is Bifunctional protein GlmU from Geobacter sulfurreducens (strain ATCC 51573 / DSM 12127 / PCA).